Consider the following 213-residue polypeptide: Transcriptional regulatory protein YdfI (213 aa).

Positions 3–118 (KVLIVDDHLV…TLFHTMDAAI (116 aa)) constitute a Response regulatory domain. Aspartate 54 is subject to 4-aspartylphosphate. Residues 142 to 207 (KQRNETQLTE…EAVTIAMQKG (66 aa)) enclose the HTH luxR-type domain. Positions 166 to 185 (SKAIAFDLGVSERTVKSRLT) form a DNA-binding region, H-T-H motif.

Phosphorylated by YdfH.

It is found in the cytoplasm. In terms of biological role, member of the two-component regulatory system YdfH/YdfI. Regulates the transcription of ydfJ by binding to its promoter region. In Bacillus subtilis (strain 168), this protein is Transcriptional regulatory protein YdfI (ydfI).